We begin with the raw amino-acid sequence, 304 residues long: Probable actin-related protein 2/3 complex subunit 2 (304 aa).

This sequence belongs to the ARPC2 family. In terms of assembly, component of the Arp2/3 complex.

The protein resides in the cytoplasm. The protein localises to the cytoskeleton. Functionally, functions as actin-binding component of the Arp2/3 complex which is involved in regulation of actin polymerization and together with an activating nucleation-promoting factor (NPF) mediates the formation of branched actin networks. Seems to contact the mother actin filament. This Anopheles gambiae (African malaria mosquito) protein is Probable actin-related protein 2/3 complex subunit 2 (Arc-p34).